Consider the following 213-residue polypeptide: DELTA-actitoxin-Aas1a (213 aa).

An N-terminal signal peptide occupies residues 1-19 (MSRLIIAFIVVTMVCSAIA). A propeptide spanning residues 20–34 (LPKKKVEPLEKDEKR) is cleaved from the precursor. Residues 37–46 (AVAGAVIEGG) form a plays an important role in the hemolytic activity region. Positions 45–64 (GGNLVMSVLDRILEAIGDVN) are N-terminal region. The phosphocholine site is built by S88, V121, S139, P141, Y167, Y171, and Y172. A trp-rich region, which is important for the binding to lipid membrane region spans residues 139–154 (SIPYDYNLYSNWWNVK). The Cell attachment site, crucial for protein stability motif lies at 178 to 180 (KGD).

Belongs to the actinoporin family. Sea anemone subfamily. In terms of assembly, octamer or nonamer in membranes. Monomer in the soluble state.

It localises to the secreted. The protein resides in the nematocyst. It is found in the target cell membrane. Its function is as follows. Pore-forming protein that forms cation-selective hydrophilic pores of around 1 nm and causes cytolysis. Pore formation is a multi-step process that involves specific recognition of membrane sphingomyelin (but neither cholesterol nor phosphatidylcholine) using aromatic rich region and adjacent phosphocholine (POC) binding site, firm binding to the membrane (mainly driven by hydrophobic interactions) accompanied by the transfer of the N-terminal region to the lipid-water interface and finally pore formation after oligomerization of monomers. This protein shows potent hemolytic activity (EC(50)=8.8 ng/ml) that is specifically inhibited by sphingomyelin. Shows no phospholipase A2 activity, nor antimicrobial activity against the four bacteria tested. Is lethal to crayfish. This is DELTA-actitoxin-Aas1a from Anthopleura asiatica (Sea anemone).